The chain runs to 399 residues: Bombesin receptor subtype-3 (399 aa).

Topologically, residues 1 to 41 are extracellular; sequence MSQKQPQSPNQTLISITNDTESSSSVVSNDTTNKGWTGDNS. Asn-10 and Asn-18 each carry an N-linked (GlcNAc...) asparagine glycan. A helical transmembrane segment spans residues 42-63; it reads PGIEALCAIYITYAVIISVGIL. The Cytoplasmic segment spans residues 64 to 82; the sequence is GNAILIKVFFKTKSMQTVP. A helical membrane pass occupies residues 83–103; it reads NIFITSLALGDLLLLLTCVPV. Residues 104–121 are Extracellular-facing; that stretch reads DATHYLAEGWLFGRIGCK. An intrachain disulfide couples Cys-120 to Cys-203. The chain crosses the membrane as a helical span at residues 122–143; sequence VLSFIRLTSVGVSVFTLTILSA. The Cytoplasmic segment spans residues 144–163; that stretch reads DRYKAVVKPLERQPSNAILK. The helical transmembrane segment at 164–184 threads the bilayer; that stretch reads TCAKAGCIWIMSMIFALPEAI. At 185 to 220 the chain is on the extracellular side; the sequence is FSNVHTLRDPNKNMTSEWCAFYPVSEKLLQEIHALL. A helical transmembrane segment spans residues 221-241; sequence SFLVFYIIPLSIISVYYSLIA. The Cytoplasmic portion of the chain corresponds to 242 to 272; sequence RTLYKSTLNIPTEEQSHARKQVESRKRIAKT. The helical transmembrane segment at 273-293 threads the bilayer; that stretch reads VLVLVALFALCWLPNHLLNLY. At 294–313 the chain is on the extracellular side; that stretch reads HSFTHKAYEDSSAIHFIVTI. The chain crosses the membrane as a helical span at residues 314 to 333; that stretch reads FSRVLAFSNSCVNPFALYWL. At 334–399 the chain is on the cytoplasmic side; sequence SKTFQKQFKA…RPMKKEENRV (66 aa). Cys-347 carries the S-palmitoyl cysteine lipid modification.

Belongs to the G-protein coupled receptor 1 family. As to quaternary structure, interacts with C6orf89. Mainly in uteri of pregnant animals.

It is found in the cell membrane. In terms of biological role, role in sperm cell division, maturation, or function. The relative order of ligand affinity is GRP = neuromedin-C &gt;&gt; neuromedin-B. This receptor mediates its action by association with G proteins that activate a phosphatidylinositol-calcium second messenger system. In Cavia porcellus (Guinea pig), this protein is Bombesin receptor subtype-3 (BRS3).